The sequence spans 217 residues: Adenylate kinase (217 aa).

10 to 15 (GAGKGT) contributes to the ATP binding site. The tract at residues 30–59 (STGDMFRAAIKEGTELGLQAKSFMDQGALV) is NMP. AMP-binding positions include threonine 31, arginine 36, 57–59 (ALV), 85–88 (GFPR), and glutamine 92. The tract at residues 126 to 163 (GRRICKTCGASYHLIFNPPAEEGKCDKDGGELYTRADD) is LID. Residue arginine 127 participates in ATP binding. Cysteine 130 and cysteine 133 together coordinate Zn(2+). Residue 136 to 137 (SY) coordinates ATP. Residues cysteine 150 and aspartate 153 each contribute to the Zn(2+) site. AMP is bound by residues arginine 160 and arginine 171. Glutamine 199 provides a ligand contact to ATP.

This sequence belongs to the adenylate kinase family. As to quaternary structure, monomer.

Its subcellular location is the cytoplasm. The enzyme catalyses AMP + ATP = 2 ADP. It participates in purine metabolism; AMP biosynthesis via salvage pathway; AMP from ADP: step 1/1. Functionally, catalyzes the reversible transfer of the terminal phosphate group between ATP and AMP. Plays an important role in cellular energy homeostasis and in adenine nucleotide metabolism. This is Adenylate kinase from Lysinibacillus sphaericus (strain C3-41).